The sequence spans 224 residues: Flagellar L-ring protein (224 aa).

A signal peptide spans 1–15 (MKWYLVALSGLLLSG). Cys16 carries the N-palmitoyl cysteine lipid modification. Cys16 carries S-diacylglycerol cysteine lipidation.

This sequence belongs to the FlgH family. In terms of assembly, the basal body constitutes a major portion of the flagellar organelle and consists of four rings (L,P,S, and M) mounted on a central rod.

The protein localises to the cell outer membrane. The protein resides in the bacterial flagellum basal body. Assembles around the rod to form the L-ring and probably protects the motor/basal body from shearing forces during rotation. This chain is Flagellar L-ring protein, found in Trichlorobacter lovleyi (strain ATCC BAA-1151 / DSM 17278 / SZ) (Geobacter lovleyi).